An 81-amino-acid polypeptide reads, in one-letter code: Carboxysome shell vertex protein CsoS4B (81 aa).

The BMV domain occupies 1–77 (MEVMRVRSDL…TDLTIGGIID (77 aa)).

It belongs to the CcmL/EutN family. CsoS4 subfamily. As to quaternary structure, homopentamer.

It is found in the carboxysome. In terms of biological role, probably forms vertices in the carboxysome. Has been modeled to induce curvature upon insertion into an otherwise flat hexagonal layer of major carboxysome subunits. A minor shell protein, only 12 pentamers of CsoS4A/CsoS4B are calculated to be present in each carboxysome. The 2 CsoS4 proteins contribute to the impermeability of the carboxysome to CO(2). Its central pore is probably too small to allow passage of metabolites; its function might be to anchor different proteins or metabolites to the carboxysome. Unlike beta-carboxysomes, alpha-carboxysomes (Cb) can form without cargo protein. CsoS2 is essential for Cb formation and is also capable of targeting foreign proteins to the Cb. The Cb shell assembles with the aid of CsoS2; CsoS1A, CsoS1B and CsoS1C form the majority of the shell while CsoS4A and CsoS4B form vertices. CsoS1D forms pseudohexamers that probably control metabolite flux into and out of the shell. The protein is Carboxysome shell vertex protein CsoS4B of Halothiobacillus neapolitanus (strain ATCC 23641 / c2) (Thiobacillus neapolitanus).